The chain runs to 362 residues: NAD(P)H-quinone oxidoreductase subunit 1, chloroplastic (362 aa).

Transmembrane regions (helical) follow at residues 26 to 48, 97 to 119, 126 to 148, 163 to 185, 254 to 276, 296 to 318, and 338 to 360; these read LIWI…VIVW, FSIG…PLGY, LSIG…LMAG, AAAQ…SLLS, LFYL…LYLG, IIGI…LFLF, and LGWK…FQLV.

The protein belongs to the complex I subunit 1 family. In terms of assembly, NDH is composed of at least 16 different subunits, 5 of which are encoded in the nucleus.

It localises to the plastid. The protein localises to the chloroplast thylakoid membrane. It catalyses the reaction a plastoquinone + NADH + (n+1) H(+)(in) = a plastoquinol + NAD(+) + n H(+)(out). The enzyme catalyses a plastoquinone + NADPH + (n+1) H(+)(in) = a plastoquinol + NADP(+) + n H(+)(out). Functionally, NDH shuttles electrons from NAD(P)H:plastoquinone, via FMN and iron-sulfur (Fe-S) centers, to quinones in the photosynthetic chain and possibly in a chloroplast respiratory chain. The immediate electron acceptor for the enzyme in this species is believed to be plastoquinone. Couples the redox reaction to proton translocation, and thus conserves the redox energy in a proton gradient. The protein is NAD(P)H-quinone oxidoreductase subunit 1, chloroplastic (ndhA) of Zea mays (Maize).